The primary structure comprises 220 residues: Response regulator ArlR (220 aa).

Positions 3-116 constitute a Response regulatory domain; it reads KILIVEDEQN…ELLARIRAML (114 aa). Position 52 is a 4-aspartylphosphate (Asp-52). Positions 122–220 form a DNA-binding region, ompR/PhoB-type; that stretch reads KNLIDIKGII…VRGVGYVVRQ (99 aa).

Post-translationally, phosphorylated by ArlS.

It localises to the cytoplasm. Member of the two-component regulatory system ArlS/ArlR. The protein is Response regulator ArlR (arlR) of Staphylococcus saprophyticus subsp. saprophyticus (strain ATCC 15305 / DSM 20229 / NCIMB 8711 / NCTC 7292 / S-41).